The sequence spans 173 residues: Globin, cuticular isoform (173 aa).

A signal peptide spans 1–16 (MLWFVAVCFAIASVSA). A Globin domain is found at 17–166 (MSPADVKKHT…FNSEAQHQLE (150 aa)). His113 contributes to the heme b binding site.

It belongs to the globin family. In terms of tissue distribution, expressed only by adult nematodes in the gut.

Its subcellular location is the secreted. The protein localises to the extracellular space. The polypeptide is Globin, cuticular isoform (GLBC) (Nippostrongylus brasiliensis (Rat hookworm)).